Here is a 1197-residue protein sequence, read N- to C-terminus: MAAPLRRDTLPDNGSYGVCRDGRVFFIDDEARATTWLHPRTGQPVNSGHMIRSDLPSGWEEGFTKEGASFFIDHNQRTTTFIHPVTGQISTENSDFRLQDQPGGRMLKQPSSTISEASTTVTTSTVDSTSGSKGSRSSGRVHSFGKRDHAIKRNPSVPVVVRGWLYKQDSSGMRLWKRKWFVLADFCLFYYKDSREESVLGSIPLPSYTIAPVGPEDHISRKYAFKAEHTGMRTYYFSADTQEDMNGWVRAMNQAALMQTHTVKRDECGHPDHVNVSEKLKKQAVPQTNHINSYVIPKPEVIQSDGLPEDKREGFVGEVEIQVTPREMEQARGKSPASRVVEVEVLAPGSTPPSRVASRAPSRAVSTPPVVQRNGTPIEQNGMPGCQRGATPSAQTPVQVQRRSTLEQVENWVKVQKEERHGLVSTESTVPRRTPPIHPKYGTMDKYQSLPKTSRQSPPAPHHQLPSEYKYSHDRLNHFQKIHGHTKRPTTHDNTVWQLFEWQQRQQFRHGSPSAPVYTPAPDYSTAVSSTRNNSDVSRSVSVPPTLADIPPPGPPGARLMSPRRPHTPAERVTVRPLEDRPIVEVPPSNSPHRLRSYKSATIERRSMPPSAYITHTVSAPSLHGKTADDTYMHLKKDLEYLDLKVSGTEALKGRPAKPVKVAESDVDVTLSRLCEQDKILQELEFRLSGLKDDKDKLESVLDVSHQQMEQYKDQPSHTDKIAYQQRLLQEDLVHIRADISRVSTEMERAWDDYSRMEQSVEQLRDVLQTQMTLCTSPQEKNQLKRELWRIEDVMTGLSSTKETFKITVDSVKNPERKLVPSVIESTVPSRCMTPSAAEVRSPQRSLTSSPLPLPLDNEDLRNRHPVPNWEEDDAPPRPPLPLLYDEDTPPVVPPLPKETSVIRHTSVRGLKRQSDERKRDRESSYSNGDYRLELRSYLSEPELPVSAHGADHVDPGYLTLQRRGLSGSSSRINQYGVASCSLRRDLELSTMERPKSALERLCSGEPQLEQQSQPQRVRMSVEEQLERMKRHQRALVRERKRNLSQGERHHSRASTRPVNSDPGSALFVEPYRPASDEWLTVRARPVMELELEPLDFEFDITRELSTPQKVWIPQRLIDDESDEDLSPEEKETRSRTVAKIKTLLSKSSMRSSEQMDFSDLDLALQQQERIMSVPRALATEASIKRRQVTAKAMSEG.

2 consecutive WW domains span residues 8–41 (DTLP…HPRT) and 53–86 (SDLP…HPVT). The segment at 98-148 (LQDQPGGRMLKQPSSTISEASTTVTTSTVDSTSGSKGSRSSGRVHSFGKRD) is disordered. Positions 111 to 140 (SSTISEASTTVTTSTVDSTSGSKGSRSSGR) are enriched in low complexity. The 100-residue stretch at 158–257 (PVVVRGWLYK…WVRAMNQAAL (100 aa)) folds into the PH domain. Disordered regions lie at residues 348–384 (PGST…NGMP), 423–467 (LVST…QLPS), and 508–577 (FRHG…TVRP). The span at 528 to 546 (VSSTRNNSDVSRSVSVPPT) shows a compositional bias: low complexity. Over residues 568-577 (TPAERVTVRP) the composition is skewed to basic and acidic residues. A coiled-coil region spans residues 678 to 799 (DKILQELEFR…RIEDVMTGLS (122 aa)). 2 disordered regions span residues 830 to 928 (SRCM…SYSN) and 1032 to 1064 (HQRA…SDPG). Basic and acidic residues predominate over residues 913–924 (RQSDERKRDRES). The stretch at 1016–1044 (QRVRMSVEEQLERMKRHQRALVRERKRNL) forms a coiled coil. Residues 1032 to 1043 (HQRALVRERKRN) are compositionally biased toward basic residues.

The protein localises to the cell junction. It localises to the adherens junction. The protein resides in the cytoplasm. It is found in the cytoskeleton. Its subcellular location is the microtubule organizing center. The protein localises to the centrosome. Required for zonula adherens biogenesis and maintenance. The polypeptide is Pleckstrin homology domain-containing family A member 7 (plekha7) (Danio rerio (Zebrafish)).